Here is a 1224-residue protein sequence, read N- to C-terminus: Dynactin subunit 1 (1224 aa).

A compositionally biased stretch (basic residues) spans 1–10 (MAQSRRHPHG). The segment at 1–30 (MAQSRRHPHGRASSAGPRMSTEASSKPLKV) is disordered. In terms of domain architecture, CAP-Gly spans 49 to 91 (GATLXATGKWVGVILDEAKGKNDGTVQGRKYFTCEENHGIFVR). Disordered stretches follow at residues 100 to 217 (DGAD…RSQV), 374 to 402 (SASEKQEHVKLQKQMEKKNTELESLRQQR), and 888 to 918 (PHCHHEQDATAMQEGEYDADRPQSKPTPPAE). Positions 117 to 146 (VPKRHSRXAAKGSKLRGAKPKKTTARRPKP) are enriched in basic residues. A compositionally biased stretch (low complexity) spans 148–180 (RTPTSAPSSGTAGPSGSASASGGEMSSSEPSTP). The stretch at 205-540 (SPTKEEENLR…QEASAEKQQQ (336 aa)) forms a coiled coil. Positions 207 to 217 (TKEEENLRSQV) are enriched in basic and acidic residues. Coiled-coil stretches lie at residues 936-1042 (LKLE…EGLR) and 1081-1117 (KDSPLLLQQIEALQLSIRHLKNENNRLKGAQMKLELA). The segment at 1203 to 1224 (WCSSSRARASPPASACSPPRPS) is disordered. Over residues 1204 to 1224 (CSSSRARASPPASACSPPRPS) the composition is skewed to low complexity.

This sequence belongs to the dynactin 150 kDa subunit family. Monomer and homodimer. Subunit of dynactin, a multiprotein complex part of a tripartite complex with dynein and a adapter, such as BICDL1, BICD2 or HOOK3. The dynactin complex is built around ACTR1A/ACTB filament and consists of an actin-related filament composed of a shoulder domain, a pointed end and a barbed end. Its length is defined by its flexible shoulder domain. The soulder is composed of 2 DCTN1 subunits, 4 DCTN2 and 2 DCTN3. DCTN1/p150(glued) binds directly to microtubules and to cytoplasmic dynein. In terms of tissue distribution, ubiquitously expressed.

Its subcellular location is the cytoplasm. It is found in the cytoskeleton. The protein resides in the microtubule organizing center. It localises to the centrosome. The protein localises to the centriole. Its subcellular location is the spindle. It is found in the cell cortex. Its function is as follows. Part of the dynactin complex that activates the molecular motor dynein for ultra-processive transport along microtubules. Plays a key role in dynein-mediated retrograde transport of vesicles and organelles along microtubules by recruiting and tethering dynein to microtubules. Binds to both dynein and microtubules providing a link between specific cargos, microtubules and dynein. Essential for targeting dynein to microtubule plus ends, recruiting dynein to membranous cargos and enhancing dynein processivity (the ability to move along a microtubule for a long distance without falling off the track). Can also act as a brake to slow the dynein motor during motility along the microtubule. Can regulate microtubule stability by promoting microtubule formation, nucleation and polymerization and by inhibiting microtubule catastrophe in neurons. Inhibits microtubule catastrophe by binding both to microtubules and to tubulin, leading to enhanced microtubule stability along the axon. Plays a role in metaphase spindle orientation. Plays a role in centriole cohesion and subdistal appendage organization and function. Its recruitment to the centriole in a KIF3A-dependent manner is essential for the maintenance of centriole cohesion and the formation of subdistal appendage. Also required for microtubule anchoring at the mother centriole. Plays a role in primary cilia formation. This Gallus gallus (Chicken) protein is Dynactin subunit 1 (DCTN1).